A 402-amino-acid polypeptide reads, in one-letter code: S-adenosylmethionine synthase (402 aa).

137-142 (GQGSAD) provides a ligand contact to ATP.

It belongs to the AdoMet synthase 2 family. Requires Mg(2+) as cofactor.

The catalysed reaction is L-methionine + ATP + H2O = S-adenosyl-L-methionine + phosphate + diphosphate. It participates in amino-acid biosynthesis; S-adenosyl-L-methionine biosynthesis; S-adenosyl-L-methionine from L-methionine: step 1/1. Its function is as follows. Catalyzes the formation of S-adenosylmethionine from methionine and ATP. This chain is S-adenosylmethionine synthase, found in Pyrobaculum aerophilum (strain ATCC 51768 / DSM 7523 / JCM 9630 / CIP 104966 / NBRC 100827 / IM2).